The sequence spans 396 residues: tRNA (guanine(9)-N1)-methyltransferase (396 aa).

2 stretches are compositionally biased toward basic and acidic residues: residues 1-18 (MEDD…HDEV) and 52-73 (DRID…HGKD). The tract at residues 1 to 109 (MEDDDRPRKY…KVKRKEKLVA (109 aa)) is disordered. The region spanning 139–357 (TQKKFQRSTL…QVIPQRKGGK (219 aa)) is the SAM-dependent MTase TRM10-type domain. Residues 264–265 (LS), glycine 284, 288–292 (DKNRH), cysteine 296, leucine 310, and 322–324 (QVL) contribute to the S-adenosyl-L-methionine site. Aspartate 288 functions as the Proton acceptor in the catalytic mechanism. A disordered region spans residues 354 to 396 (KGGKLKSADHESEDQTPRESVEAVEAEPDGEGAAAEAGEGGKE). The span at 359-374 (KSADHESEDQTPRESV) shows a compositional bias: basic and acidic residues.

This sequence belongs to the class IV-like SAM-binding methyltransferase superfamily. TRM10 family. In terms of assembly, monomer.

Its subcellular location is the cytoplasm. It is found in the nucleus. It carries out the reaction guanosine(9) in tRNA + S-adenosyl-L-methionine = N(1)-methylguanosine(9) in tRNA + S-adenosyl-L-homocysteine + H(+). In terms of biological role, S-adenosyl-L-methionine-dependent guanine N(1)-methyltransferase that catalyzes the formation of N(1)-methylguanine at position 9 (m1G9) in cytoplasmic tRNA. The polypeptide is tRNA (guanine(9)-N1)-methyltransferase (Aspergillus fumigatus (strain ATCC MYA-4609 / CBS 101355 / FGSC A1100 / Af293) (Neosartorya fumigata)).